Here is a 200-residue protein sequence, read N- to C-terminus: 3-isopropylmalate dehydratase small subunit (200 aa).

This sequence belongs to the LeuD family. LeuD type 1 subfamily. In terms of assembly, heterodimer of LeuC and LeuD.

It carries out the reaction (2R,3S)-3-isopropylmalate = (2S)-2-isopropylmalate. Its pathway is amino-acid biosynthesis; L-leucine biosynthesis; L-leucine from 3-methyl-2-oxobutanoate: step 2/4. In terms of biological role, catalyzes the isomerization between 2-isopropylmalate and 3-isopropylmalate, via the formation of 2-isopropylmaleate. This Aliivibrio fischeri (strain ATCC 700601 / ES114) (Vibrio fischeri) protein is 3-isopropylmalate dehydratase small subunit.